We begin with the raw amino-acid sequence, 484 residues long: MKGRRRRRREYCKFTLLLALYTLLLLLVPSVLDSHSEQDKGRNCPGLQRSLGVWSLEAAAAGEREQGAEVRSLAEGNPDRSPGSPGNLSAVGEAVTQEKQHIYVHATWRTGSSFLGELFNQHPDVFYLYEPMWHLWQALYPGDAESLQGALRDMLRSLFRCDFSVLRLYAQPGDPGERAPDSANLTTAMLFRWRTNKVICSPPLCPAAPRARADVGLVEDKACESTCPPVSLRALEAECRKYPVVVIKDVRLLDLGVLVPLLRDPGLNLKVVQLFRDPRAVHNSRLKSRQGLLRESIQVLRTRQRGDHFHRVLLAHGVDARPGGQARALPSAPRADFFLTSALEVICEAWLRDLLFTRGAPAWLRRRYLRLRYEDLVWQPQAQLRRLLRFSGLRTLAALDAFAFNMTRGSAYGADRPFHLSARDAREAVHAWRERLSQEQVRQVETACAPAMRLLAYPRSGDERDRKTVREGETPLETKANWAV.

Over 1–12 the chain is Cytoplasmic; the sequence is MKGRRRRRREYC. The helical; Signal-anchor for type II membrane protein transmembrane segment at 13–33 threads the bilayer; sequence KFTLLLALYTLLLLLVPSVLD. The Lumenal portion of the chain corresponds to 34–484; sequence SHSEQDKGRN…PLETKANWAV (451 aa). Residues 71-90 are disordered; the sequence is RSLAEGNPDRSPGSPGNLSA. N-linked (GlcNAc...) asparagine glycosylation is present at Asn87. 108–114 provides a ligand contact to 3'-phosphoadenylyl sulfate; that stretch reads WRTGSSF. N-linked (GlcNAc...) asparagine glycosylation occurs at Asn184. 276–284 serves as a coordination point for 3'-phosphoadenylyl sulfate; sequence RDPRAVHNS. N-linked (GlcNAc...) asparagine glycosylation occurs at Asn405. Ser460 is subject to Phosphoserine. Residues 460–473 show a composition bias toward basic and acidic residues; that stretch reads SGDERDRKTVREGE. The tract at residues 460–484 is disordered; it reads SGDERDRKTVREGETPLETKANWAV.

The protein belongs to the sulfotransferase 1 family. Gal/GlcNAc/GalNAc subfamily. As to expression, widely expressed. Highly expressed in kidney. Expressed at lower level in heart, lung and liver.

It localises to the golgi apparatus membrane. The catalysed reaction is chondroitin beta-D-glucuronate + n 3'-phosphoadenylyl sulfate = chondroitin 6'-sulfate + n adenosine 3',5'-bisphosphate + n H(+). In terms of biological role, sulfotransferase that utilizes 3'-phospho-5'-adenylyl sulfate (PAPS) as sulfonate donor to catalyze the transfer of sulfate to position 6 of non-reducing N-acetylglucosamine (GlcNAc) residues. Preferentially acts on mannose-linked GlcNAc. Also able to catalyze the transfer of sulfate to position 6 of the N-acetylgalactosamine (GalNAc) residue of chondroitin. Also acts on core 2 mucin-type oligosaccharide and N-acetyllactosamine oligomer with a lower efficiency. Has weak or no activity toward keratan sulfate and oligosaccharides containing the Galbeta1-4GlcNAc. Catalyzes 6-O-sulfation of beta-benzyl GlcNAc but not alpha- or beta-benzyl GalNAc. The chain is Carbohydrate sulfotransferase 7 (Chst7) from Mus musculus (Mouse).